Reading from the N-terminus, the 1098-residue chain is Probable arabinosyltransferase B (1098 aa).

Transmembrane regions (helical) follow at residues 28 to 50 (WVAT…LPVV), 217 to 239 (LKLL…LWRL), 271 to 293 (ASWR…WHVI), 402 to 419 (LRPE…YVLI), 434 to 456 (AVVT…AALV), 472 to 494 (LVGT…TVVF), 541 to 558 (FGFL…FIML), 570 to 587 (PAWR…FLMF), 597 to 619 (GLFA…PSVL), 626 to 648 (MAFL…GWWY), 663 to 685 (IDGI…YAAW), and 698 to 720 (LIRA…VFVA).

The protein belongs to the emb family.

Its subcellular location is the cell membrane. Functionally, arabinosyl transferase responsible for the polymerization of arabinose into the arabinan of arabinogalactan. This is Probable arabinosyltransferase B (embB) from Mycobacterium tuberculosis (strain CDC 1551 / Oshkosh).